The chain runs to 212 residues: Peroxisomal membrane protein 4 (212 aa).

2 helical membrane passes run 97–117 and 153–173; these read GETH…LLFG and WDPF…LFEY. A glycan (N-linked (GlcNAc...) asparagine) is linked at Asn-206.

This sequence belongs to the peroxisomal membrane protein PXMP2/4 family. As to quaternary structure, interacts with PEX19.

The protein resides in the peroxisome membrane. The protein is Peroxisomal membrane protein 4 (Pxmp4) of Mus musculus (Mouse).